A 131-amino-acid polypeptide reads, in one-letter code: Small ribosomal subunit protein uS8 (131 aa).

This sequence belongs to the universal ribosomal protein uS8 family. Part of the 30S ribosomal subunit. Contacts proteins S5 and S12.

Functionally, one of the primary rRNA binding proteins, it binds directly to 16S rRNA central domain where it helps coordinate assembly of the platform of the 30S subunit. In Paraburkholderia phymatum (strain DSM 17167 / CIP 108236 / LMG 21445 / STM815) (Burkholderia phymatum), this protein is Small ribosomal subunit protein uS8.